Consider the following 157-residue polypeptide: Small ribosomal subunit protein uS7 (157 aa).

This sequence belongs to the universal ribosomal protein uS7 family. As to quaternary structure, part of the 30S ribosomal subunit. Contacts proteins S9 and S11.

One of the primary rRNA binding proteins, it binds directly to 16S rRNA where it nucleates assembly of the head domain of the 30S subunit. Is located at the subunit interface close to the decoding center, probably blocks exit of the E-site tRNA. This Variovorax paradoxus (strain S110) protein is Small ribosomal subunit protein uS7.